Consider the following 511-residue polypeptide: Vesicular acetylcholine transporter (511 aa).

Residues 1–36 (MVVGQAKAAMGKISSAIGERSKRISGAMNEPLRKRK) are Cytoplasmic-facing. A helical transmembrane segment spans residues 37–57 (ILLVIVCIAMLLDNMLYMVIV). Residues 58 to 108 (PIVPNYLETIRTYKLVYITIPSNGTNGSLLNSTQRAVLERNPNANEDIQIG) lie on the Lumenal, vesicle side of the membrane. Residues asparagine 80, asparagine 83, and asparagine 88 are each glycosylated (N-linked (GlcNAc...) asparagine). Residues 109-129 (VLFASKAILQLLSNPFTGTFI) form a helical membrane-spanning segment. The Cytoplasmic portion of the chain corresponds to 130–135 (DRVGYD). Residues 136-156 (IPLLIGLTIMFFSTITFAFGE) traverse the membrane as a helical segment. At 157–165 (SYAILFAAR) the chain is on the lumenal, vesicle side. Residues 166–186 (SLQGLGSAFADTSGIAMIADK) traverse the membrane as a helical segment. The Cytoplasmic portion of the chain corresponds to 187–197 (YTEESERTQAL). A helical membrane pass occupies residues 198 to 218 (GIALAFISFGSLVAPPFGGVL). The Lumenal, vesicle portion of the chain corresponds to 219–225 (YQFAGKW). A helical transmembrane segment spans residues 226-246 (VPFLVLSFVCLLDGILLLMVV). Residues 247–267 (TPFASRTRGNTLQGTPIHKLM) are Cytoplasmic-facing. A helical transmembrane segment spans residues 268-288 (IDPYIAVVAGALTTCNIPLAF). Residues 289–306 (LEPTISNWMKKTMNASEW) are Lumenal, vesicle-facing. The N-linked (GlcNAc...) asparagine glycan is linked to asparagine 302. Residues 307–327 (QMGITWLPAFFPHILGVYITV) traverse the membrane as a helical segment. Residues 328–337 (KLAAKYPNYQ) lie on the Cytoplasmic side of the membrane. The helical transmembrane segment at 338–358 (WLYGAFGLVIIGVSSCTIPAC) threads the bilayer. Over 359–363 (RNFEE) the chain is Lumenal, vesicle. Residues 364–384 (LIIPLCALCFGIALVDTALLP) form a helical membrane-spanning segment. The Cytoplasmic segment spans residues 385–400 (TLAFLVDIRYVSVYGS). The chain crosses the membrane as a helical span at residues 401 to 421 (VYAIADISYSVAYALGPIMAG). The Lumenal, vesicle segment spans residues 422 to 428 (QIVHDLG). The chain crosses the membrane as a helical span at residues 429 to 449 (FVQLNLGMGLVNILYAPALLF). Residues 450-511 (LRNVCQMKPS…VLSDQEGYSE (62 aa)) are Cytoplasmic-facing. Positions 486-511 (AKEPHGTSSGNHSVHAVLSDQEGYSE) are disordered.

It belongs to the major facilitator superfamily. Vesicular transporter family. As to expression, high expression in the electric lobe of the brain.

Its subcellular location is the membrane. Its function is as follows. Involved in acetylcholine transport into synaptic vesicles. In Torpedo torpedo (Common torpedo), this protein is Vesicular acetylcholine transporter.